The primary structure comprises 1679 residues: Probable myosin heavy chain ECU04_1000 (1679 aa).

Over residues 1–14 the composition is skewed to polar residues; it reads MEGTTNKDIGSGSS. The segment at 1–22 is disordered; it reads MEGTTNKDIGSGSSRPGGEVSV. The 49-residue stretch at 31-79 folds into the Myosin N-terminal SH3-like domain; the sequence is MEKKWVWAPSSKEAYVCGFVVKEEGDVLEIDCRGVIVRHKSCEVFRMNP. Positions 83–754 constitute a Myosin motor domain; the sequence is DMVDDLAELS…VLADIEDMRD (672 aa). Residue 176 to 183 participates in ATP binding; the sequence is GESGAGKT. Residues 624–646 are actin-binding; that stretch reads LASLMSELRRTNPHFVRCIIPNL. The stretch at 823–1644 forms a coiled coil; sequence GEMKEKEAMI…SKMLEMKKKL (822 aa).

This sequence belongs to the TRAFAC class myosin-kinesin ATPase superfamily. Myosin family.

Its function is as follows. Cellular myosin that appears to play a role in cytokinesis, cell shape, and specialized functions such as secretion and capping. The chain is Probable myosin heavy chain ECU04_1000 from Encephalitozoon cuniculi (strain GB-M1) (Microsporidian parasite).